The chain runs to 154 residues: Protein Smg homolog (154 aa).

The protein belongs to the Smg family.

The polypeptide is Protein Smg homolog (Aromatoleum aromaticum (strain DSM 19018 / LMG 30748 / EbN1) (Azoarcus sp. (strain EbN1))).